Consider the following 489-residue polypeptide: Probable serine protease EDA2 (489 aa).

An N-terminal signal peptide occupies residues 1–25 (MSLEFGFILINIFTAIVSFSTLSHA). N35, N51, and N162 each carry an N-linked (GlcNAc...) asparagine glycan. S178 serves as the catalytic Charge relay system. N-linked (GlcNAc...) asparagine glycosylation is found at N253, N293, N365, and N406. D410 serves as the catalytic Charge relay system. N419 is a glycosylation site (N-linked (GlcNAc...) asparagine). The active-site Charge relay system is H436. N456 carries N-linked (GlcNAc...) asparagine glycosylation.

It belongs to the peptidase S28 family.

The protein resides in the secreted. In terms of biological role, may be involved in a proteolytic pathway controlling the nuclear division phase of megagametogenesis. This chain is Probable serine protease EDA2 (EDA2), found in Arabidopsis thaliana (Mouse-ear cress).